The following is a 577-amino-acid chain: Peroxynitrite isomerase THAP4 (577 aa).

The THAP-type zinc-finger motif lies at 1-85; sequence MVICCAAVNC…LKPTAVPSIF (85 aa). The interval 84–221 is disordered; sequence IFHLTEKKRG…DKSGISMDDF (138 aa). The segment covering 157–170 has biased composition (low complexity); sequence AAQEAASQEQAQQA. Ser163 carries the post-translational modification Phosphoserine. The HCFC1-binding motif (HBM) motif lies at 235–238; sequence LHSY. At Ser239 the chain carries Phosphoserine. Residues 240–324 form a disordered region; the sequence is FSSKHTRERP…AVQSEHSDAS (85 aa). Basic and acidic residues predominate over residues 247–266; sequence ERPSVPREPIDRKRLKKDVE. The span at 290-300 shows a compositional bias: low complexity; sequence TATPQKPSQSP. The tract at residues 415–577 is nitrobindin; it reads PPKMNPVVEP…LHVTYKKVTP (163 aa). Residues Thr444 and His567 each contribute to the heme b site.

It in the C-terminal section; belongs to the nitrobindin family. In terms of assembly, homodimer. The cofactor is heme b.

It is found in the cytoplasm. The protein localises to the nucleus. It catalyses the reaction peroxynitrite = nitrate. Its pathway is nitrogen metabolism. Heme-binding protein able to scavenge peroxynitrite and to protect free L-tyrosine against peroxynitrite-mediated nitration, by acting as a peroxynitrite isomerase that converts peroxynitrite to nitrate. Therefore, this protein likely plays a role in peroxynitrite sensing and in the detoxification of reactive nitrogen and oxygen species (RNS and ROS, respectively). Is able to bind nitric oxide (NO) in vitro, but may act as a sensor of peroxynitrite levels in vivo, possibly modulating the transcriptional activity residing in the N-terminal region. In Homo sapiens (Human), this protein is Peroxynitrite isomerase THAP4.